A 251-amino-acid chain; its full sequence is Triosephosphate isomerase (251 aa).

Residue 12-14 (NWK) participates in substrate binding. The active-site Electrophile is the H98. E168 acts as the Proton acceptor in catalysis. Substrate contacts are provided by residues G174, S213, and 234–235 (GG).

This sequence belongs to the triosephosphate isomerase family. Homodimer.

The protein localises to the cytoplasm. It catalyses the reaction D-glyceraldehyde 3-phosphate = dihydroxyacetone phosphate. It participates in carbohydrate biosynthesis; gluconeogenesis. The protein operates within carbohydrate degradation; glycolysis; D-glyceraldehyde 3-phosphate from glycerone phosphate: step 1/1. Involved in the gluconeogenesis. Catalyzes stereospecifically the conversion of dihydroxyacetone phosphate (DHAP) to D-glyceraldehyde-3-phosphate (G3P). This chain is Triosephosphate isomerase, found in Afipia carboxidovorans (strain ATCC 49405 / DSM 1227 / KCTC 32145 / OM5) (Oligotropha carboxidovorans).